Reading from the N-terminus, the 59-residue chain is uncharacterized protein (59 aa).

An N-terminal signal peptide occupies residues 1-21 (MYLFYVLLSSLFLSALIYVIG). Over 22 to 24 (KSH) the chain is Extracellular. The helical transmembrane segment at 25-45 (PNLFMFISLFVNVVTILYLVF) threads the bilayer. The Cytoplasmic segment spans residues 46-59 (KDYGQYIIAKPINT).

It is found in the host membrane. This is an uncharacterized protein from Acidianus convivator (ABV).